We begin with the raw amino-acid sequence, 282 residues long: Protoheme IX farnesyltransferase (282 aa).

Helical transmembrane passes span 9 to 29 (LAKP…FLLA), 39 to 59 (LPLF…GCVF), 79 to 99 (LVTG…LLIL), 102 to 122 (LVLY…GFIV), 139 to 159 (VLGG…VVNI), 165 to 185 (LALF…IAML), 210 to 230 (IMLF…VLGS), 231 to 251 (ADLF…YKSI), and 261 to 281 (VFAK…CLTM).

It belongs to the UbiA prenyltransferase family. Protoheme IX farnesyltransferase subfamily.

The protein resides in the cell inner membrane. The enzyme catalyses heme b + (2E,6E)-farnesyl diphosphate + H2O = Fe(II)-heme o + diphosphate. It functions in the pathway porphyrin-containing compound metabolism; heme O biosynthesis; heme O from protoheme: step 1/1. In terms of biological role, converts heme B (protoheme IX) to heme O by substitution of the vinyl group on carbon 2 of heme B porphyrin ring with a hydroxyethyl farnesyl side group. In Francisella tularensis subsp. tularensis (strain FSC 198), this protein is Protoheme IX farnesyltransferase.